Here is a 156-residue protein sequence, read N- to C-terminus: Small ribosomal subunit protein uS7 (156 aa).

This sequence belongs to the universal ribosomal protein uS7 family. Part of the 30S ribosomal subunit. Contacts proteins S9 and S11.

Functionally, one of the primary rRNA binding proteins, it binds directly to 16S rRNA where it nucleates assembly of the head domain of the 30S subunit. Is located at the subunit interface close to the decoding center, probably blocks exit of the E-site tRNA. The polypeptide is Small ribosomal subunit protein uS7 (Crocosphaera subtropica (strain ATCC 51142 / BH68) (Cyanothece sp. (strain ATCC 51142))).